The primary structure comprises 453 residues: Jacalin-related lectin 40 (453 aa).

Jacalin-type lectin domains follow at residues 1–142, 154–296, and 306–449; these read MAQK…YFTT, HIKL…YFSS, and PEKL…YVVP. N-acetylalanine is present on alanine 2.

The protein belongs to the jacalin lectin family. In terms of tissue distribution, expressed in roots.

This chain is Jacalin-related lectin 40 (JAL40), found in Arabidopsis thaliana (Mouse-ear cress).